A 552-amino-acid chain; its full sequence is Phosphoglucomutase (552 aa).

The active-site Phosphoserine intermediate is the Ser143. 4 residues coordinate Mg(2+): Ser143, Asp295, Asp297, and Asp299.

Belongs to the phosphohexose mutase family. Requires Mg(2+) as cofactor.

It carries out the reaction alpha-D-glucose 1-phosphate = alpha-D-glucose 6-phosphate. It functions in the pathway glycolipid metabolism; diglucosyl-diacylglycerol biosynthesis. Catalyzes the interconversion between glucose-6-phosphate and alpha-glucose-1-phosphate. This is the first step in the biosynthesis of diglucosyl-diacylglycerol (Glc2-DAG), i.e. the predominant glycolipid found in the S.aureus membrane, which is also used as a membrane anchor for lipoteichoic acid (LTA). In Staphylococcus aureus (strain Mu50 / ATCC 700699), this protein is Phosphoglucomutase (pgcA).